The sequence spans 285 residues: Bifunctional protein FolD (285 aa).

NADP(+) contacts are provided by residues 166–168 (GAS) and Ile232.

It belongs to the tetrahydrofolate dehydrogenase/cyclohydrolase family. In terms of assembly, homodimer.

The enzyme catalyses (6R)-5,10-methylene-5,6,7,8-tetrahydrofolate + NADP(+) = (6R)-5,10-methenyltetrahydrofolate + NADPH. The catalysed reaction is (6R)-5,10-methenyltetrahydrofolate + H2O = (6R)-10-formyltetrahydrofolate + H(+). Its pathway is one-carbon metabolism; tetrahydrofolate interconversion. In terms of biological role, catalyzes the oxidation of 5,10-methylenetetrahydrofolate to 5,10-methenyltetrahydrofolate and then the hydrolysis of 5,10-methenyltetrahydrofolate to 10-formyltetrahydrofolate. The polypeptide is Bifunctional protein FolD (Photobacterium profundum (strain SS9)).